The primary structure comprises 2259 residues: Putative Polycomb group protein ASXL3 (2259 aa).

Positions 10–83 (RTWAEAARLA…KSGLYALRKE (74 aa)) constitute an HTH HARE-type domain. The tract at residues 181 to 230 (VVLTPLKVSDEQSDSPSGSESKNGEADSSDKEMKHGQKSPTGKQTSQHLK) is disordered. The span at 202–215 (KNGEADSSDKEMKH) shows a compositional bias: basic and acidic residues. Residues 218 to 227 (KSPTGKQTSQ) show a composition bias toward polar residues. The 110-residue stretch at 253 to 362 (PGSILVNTNL…FERFYGERSG (110 aa)) folds into the DEUBAD domain. Disordered regions lie at residues 364 to 399 (SREESIKLTSGPNHEGAEGSSSHGDSGIPGPSAQNA), 607 to 643 (CISETSFSSESPEGACASLPSPGGETQSTSEESCTPA), 703 to 810 (EASP…IPEP), 857 to 1012 (SEMT…PLKI), 1025 to 1049 (SQPVSKAESRASTSTSVSSGRNTGA), 1126 to 1150 (RLPSVSTKEDSLNMEASPTPETKME), 1433 to 1462 (LSGENLDNNSGPLNRTDNSEKPQQPAGGFV), 1614 to 1643 (DPMRNTAPPVVSHSSSSKQKEHPEQTGLKA), 1687 to 1719 (DFPGPERPPPVTEVTSSASVQPTQTMKPSTTSP), and 1993 to 2075 (NMLS…TTKR). Polar residues-rich tracts occupy residues 607 to 617 (CISETSFSSES), 630 to 643 (GETQSTSEESCTPA), and 703 to 717 (EASPVSNLPLTSEAS). Residues 722–741 (LPPTSETSSESSMPLTSETP) show a composition bias toward low complexity. Polar residues-rich tracts occupy residues 770-781 (KSPSGSEEANSP) and 926-945 (QSSTLNRLETSHTSKVSEPS). Basic and acidic residues-rich tracts occupy residues 949 to 985 (DGIRNDNRESEISKRKTVEHSFGICKEKRARIEDDQS) and 995 to 1006 (PEKEQPPREEPR). Positions 1034-1043 (RASTSTSVSS) are enriched in low complexity. A compositionally biased stretch (polar residues) spans 1437–1448 (NLDNNSGPLNRT). A compositionally biased stretch (polar residues) spans 1699 to 1719 (EVTSSASVQPTQTMKPSTTSP). Positions 2023-2055 (PLPPPPPPPPPPPPPLALPPPPPPPPPLPPPLP) are enriched in pro residues. The PHD-type; atypical zinc-finger motif lies at 2221 to 2258 (ELKCSCRLKAMIVCKGCGAFCHDDCIGPSKLCVACLVV).

Belongs to the Asx family. In terms of assembly, core component of the polycomb repressive deubiquitinase (PR-DUB) complex, at least composed of BAP1, one of ASXL1, ASXL2 or (probably) ASXL3, and one of MBD5 or MBD6. Distinct combinations of ASXL and MBD proteins may preferentially bind specific histone modification marks. The PR-DUB core associates with a number of accessory proteins, including FOXK1, FOXK2, KDM1B, HCFC1 and OGT; KDM1B specifically associates with ASXL2 PR-DUB complexes. Interacts (via PHD domain) with MBD5 and MBD6 (via MBD domain); the interaction is probably direct and mediates association of MBD proteins with the PR-DUB core.

It localises to the nucleus. In terms of biological role, putative Polycomb group (PcG) protein. PcG proteins act by forming multiprotein complexes, which are required to maintain the transcriptionally repressive state of homeotic genes throughout development. PcG proteins are not required to initiate repression, but to maintain it during later stages of development. They probably act via methylation of histones, rendering chromatin heritably changed in its expressibility. Non-catalytic component of the PR-DUB complex, a complex that specifically mediates deubiquitination of histone H2A monoubiquitinated at 'Lys-119' (H2AK119ub1). The PR-DUB complex is an epigenetic regulator of gene expression and acts as a transcriptional coactivator, affecting genes involved in development, cell communication, signaling, cell proliferation and cell viability. ASXL1, ASXL2 and ASXL3 function redundantly in the PR-DUB complex and are essential for chromatin recruitment and transcriptional activation of associated genes. In Mus musculus (Mouse), this protein is Putative Polycomb group protein ASXL3 (Asxl3).